The chain runs to 411 residues: Probable G-protein coupled receptor AH9.1 (411 aa).

Residues 1 to 18 (MLLFLLRRIFDCRYKYKL) lie on the Cytoplasmic side of the membrane. A helical membrane pass occupies residues 19–39 (FVKALVLFLTIVYNAGLVHFF). Over 40 to 55 (FRTTSLDDSPEMNHVD) the chain is Extracellular. A helical transmembrane segment spans residues 56 to 76 (YVAHVIVMPIVLSIGMINQCL). Topologically, residues 77 to 87 (NVCTLLHIRTS) are cytoplasmic. Residues 88–108 (IFLYLKASAIADILSIVAFIP) form a helical membrane-spanning segment. The Extracellular segment spans residues 109–131 (FLFRHAKLIDPSWELGMFYHAHL). A helical membrane pass occupies residues 132 to 152 (ELPLINALISASALNIVAMTV). The Cytoplasmic segment spans residues 153 to 176 (DRYVSVCHPIKFFQNNETKPSRRR). A helical transmembrane segment spans residues 177-197 (TMLIIVMIYFIALMIYFPSVF). Topologically, residues 198–229 (QKKLGVVTDALTNKTIYTIVRNEDVEALQVFK) are extracellular. Asn210 is a glycosylation site (N-linked (GlcNAc...) asparagine). Residues 230–250 (FYLIVRECICRWGPVLLLVIL) form a helical membrane-spanning segment. The Cytoplasmic segment spans residues 251 to 299 (NMCVVRGLRKIDKRNWFWRQPSQNSRTETLAQRQLRSPRDDRSRISVLL). A helical membrane pass occupies residues 300-320 (FVTSATFIICNIPASVISFFV). At 321-333 (RRVSGSLFWQIFR) the chain is on the extracellular side. The helical transmembrane segment at 334 to 354 (AIANLLQVTSYLYNFYLYALC) threads the bilayer. Topologically, residues 355–411 (SSEYRHAFLRLFGCRSSLSPTSTGDSPTVRVSVHGKRCHQAVVLLGNENHENPVDEV) are cytoplasmic.

It belongs to the G-protein coupled receptor 1 family.

Its subcellular location is the cell membrane. In terms of biological role, not known. Putative receptor. The sequence is that of Probable G-protein coupled receptor AH9.1 from Caenorhabditis elegans.